A 681-amino-acid polypeptide reads, in one-letter code: Chaperone protein HtpG (681 aa).

Residues 1–326 (MQKGNIGVTT…SPDIPLNVSR (326 aa)) form an a; substrate-binding region. A b region spans residues 327 to 545 (SYLQSDSNVK…YMRRMKEMAN (219 aa)). Residues 546–681 (IQAGMSFYGE…NFVKRSIELI (136 aa)) are c. The interval 589–620 (IQTEMNSVSKRRNELKDSQKDKKEEDIPTAEK) is disordered. A compositionally biased stretch (basic and acidic residues) spans 599–620 (RRNELKDSQKDKKEEDIPTAEK).

It belongs to the heat shock protein 90 family. As to quaternary structure, homodimer.

The protein resides in the cytoplasm. Molecular chaperone. Has ATPase activity. In Bacteroides thetaiotaomicron (strain ATCC 29148 / DSM 2079 / JCM 5827 / CCUG 10774 / NCTC 10582 / VPI-5482 / E50), this protein is Chaperone protein HtpG.